The following is a 270-amino-acid chain: Phosphatidylglycerol--prolipoprotein diacylglyceryl transferase (270 aa).

The next 4 helical transmembrane spans lie at 19–39, 56–76, 92–112, and 116–136; these read FPVY…LWLA, LVLI…VIFE, QGGL…ILFA, and GVSF…GQAI. Residue Arg-138 participates in a 1,2-diacyl-sn-glycero-3-phospho-(1'-sn-glycerol) binding. The next 3 helical transmembrane spans lie at 178–198, 206–226, and 236–256; these read HPTF…LLAL, GELF…VEGL, and LRIA…FIIV.

This sequence belongs to the Lgt family.

It is found in the cell membrane. It catalyses the reaction L-cysteinyl-[prolipoprotein] + a 1,2-diacyl-sn-glycero-3-phospho-(1'-sn-glycerol) = an S-1,2-diacyl-sn-glyceryl-L-cysteinyl-[prolipoprotein] + sn-glycerol 1-phosphate + H(+). It participates in protein modification; lipoprotein biosynthesis (diacylglyceryl transfer). Functionally, catalyzes the transfer of the diacylglyceryl group from phosphatidylglycerol to the sulfhydryl group of the N-terminal cysteine of a prolipoprotein, the first step in the formation of mature lipoproteins. This Bacillus cereus (strain G9842) protein is Phosphatidylglycerol--prolipoprotein diacylglyceryl transferase.